The chain runs to 322 residues: Cysteine protease yopT1 (322 aa).

Residues 42 to 69 (LSHSNRQKKLSATIKHNQSSRSMLDRKL) are disordered. Active-site residues include cysteine 139, histidine 258, and aspartate 274.

This sequence belongs to the peptidase C58 family. As to quaternary structure, interacts with human ARHA.

Its subcellular location is the secreted. Cysteine protease, which is translocated into infected cells and plays a central role in pathogenesis by cleaving the C-terminus end of the human small GTPase RhoA/ARHA, a regulator of cytoskeleton. Once cleaved, ARHA loses its lipid modification, and is released from the cell membrane, leading to the subsequent disruption of actin cytoskeleton of the host cell. The sequence is that of Cysteine protease yopT1 (yopT1) from Yersinia enterocolitica serotype O:8 / biotype 1B (strain NCTC 13174 / 8081).